Reading from the N-terminus, the 369-residue chain is tRNA/tmRNA (uracil-C(5))-methyltransferase (369 aa).

Residues Gln192, Tyr221, Asn226, Glu242, and Asp302 each coordinate S-adenosyl-L-methionine. The active-site Nucleophile is Cys327. Catalysis depends on Glu361, which acts as the Proton acceptor.

The protein belongs to the class I-like SAM-binding methyltransferase superfamily. RNA M5U methyltransferase family. TrmA subfamily.

It carries out the reaction uridine(54) in tRNA + S-adenosyl-L-methionine = 5-methyluridine(54) in tRNA + S-adenosyl-L-homocysteine + H(+). The catalysed reaction is uridine(341) in tmRNA + S-adenosyl-L-methionine = 5-methyluridine(341) in tmRNA + S-adenosyl-L-homocysteine + H(+). Dual-specificity methyltransferase that catalyzes the formation of 5-methyluridine at position 54 (m5U54) in all tRNAs, and that of position 341 (m5U341) in tmRNA (transfer-mRNA). This is tRNA/tmRNA (uracil-C(5))-methyltransferase from Haemophilus ducreyi (strain 35000HP / ATCC 700724).